The primary structure comprises 239 residues: Large ribosomal subunit protein uL1 (239 aa).

The protein belongs to the universal ribosomal protein uL1 family. In terms of assembly, part of the 50S ribosomal subunit.

Binds directly to 23S rRNA. The L1 stalk is quite mobile in the ribosome, and is involved in E site tRNA release. Its function is as follows. Protein L1 is also a translational repressor protein, it controls the translation of the L11 operon by binding to its mRNA. This Rickettsia conorii (strain ATCC VR-613 / Malish 7) protein is Large ribosomal subunit protein uL1.